We begin with the raw amino-acid sequence, 116 residues long: Methionine-R-sulfoxide reductase B1 (116 aa).

The MsrB domain maps to 1–106 (MSFCSFFGGE…FSSSLKFIPK (106 aa)). 4 residues coordinate Zn(2+): C23, C26, C71, and C74. U95 (nucleophile) is an active-site residue. Position 95 (U95) is a non-standard amino acid, selenocysteine.

The protein belongs to the MsrB Met sulfoxide reductase family. The cofactor is Zn(2+). Post-translationally, truncated MSRB1/SEPX1 proteins produced by failed UGA/Sec decoding are ubiquitinated by the CRL2(FEM1C) E3 ubiquitin-protein ligase complex.

It is found in the cytoplasm. Its subcellular location is the nucleus. It localises to the cytoskeleton. It catalyses the reaction L-methionyl-[protein] + [thioredoxin]-disulfide + H2O = L-methionyl-(R)-S-oxide-[protein] + [thioredoxin]-dithiol. The catalysed reaction is [thioredoxin]-disulfide + L-methionine + H2O = L-methionine (R)-S-oxide + [thioredoxin]-dithiol. Functionally, methionine-sulfoxide reductase that specifically reduces methionine (R)-sulfoxide back to methionine. While in many cases, methionine oxidation is the result of random oxidation following oxidative stress, methionine oxidation is also a post-translational modification that takes place on specific residue. Acts as a regulator of actin assembly by reducing methionine (R)-sulfoxide mediated by MICALs (MICAL1, MICAL2 or MICAL3) on actin, thereby promoting filament repolymerization. Plays a role in innate immunity by reducing oxidized actin, leading to actin repolymerization in macrophages. The chain is Methionine-R-sulfoxide reductase B1 (Msrb1) from Rattus norvegicus (Rat).